The sequence spans 310 residues: CCR4-NOT transcription complex subunit 7 (310 aa).

A divalent metal cation is bound by residues Asp51, Glu53, Asp172, and Asp245.

The protein belongs to the CAF1 family. In terms of assembly, component of the CCR4-NOT complex at least composed of ccf-1, ccr-4 and let-711, which is required for germ cell development in hermaphrodites. Within the complex interacts with let-711. In terms of tissue distribution, highly expressed in the germline. In particular, highly expressed in germ cells that enter meiosis and progress through the pachytene stage.

It is found in the nucleus. The protein resides in the cytoplasm. The catalysed reaction is Exonucleolytic cleavage of poly(A) to 5'-AMP.. Functionally, catalytic component of the CCR4-NOT complex which is one of the major cellular mRNA deadenylases and is linked to various cellular processes including bulk mRNA degradation, miRNA-mediated repression, translational repression during translational initiation and general transcription regulation. Within the complex, plays a role in miRNA-mediated deadenylation in embryos. Within the complex promotes germ cell development and fertility in hermaphrodites. Additional complex functions may be a consequence of its influence on mRNA expression. In Caenorhabditis elegans, this protein is CCR4-NOT transcription complex subunit 7.